Here is a 118-residue protein sequence, read N- to C-terminus: Ribonuclease P protein component 4 (118 aa).

Residues Cys-59, Cys-62, Cys-85, and Cys-88 each coordinate Zn(2+).

It belongs to the eukaryotic/archaeal RNase P protein component 4 family. Consists of a catalytic RNA component and at least 4-5 protein subunits. The cofactor is Zn(2+).

The protein localises to the cytoplasm. It carries out the reaction Endonucleolytic cleavage of RNA, removing 5'-extranucleotides from tRNA precursor.. Part of ribonuclease P, a protein complex that generates mature tRNA molecules by cleaving their 5'-ends. In Sulfolobus acidocaldarius (strain ATCC 33909 / DSM 639 / JCM 8929 / NBRC 15157 / NCIMB 11770), this protein is Ribonuclease P protein component 4.